Reading from the N-terminus, the 309-residue chain is Olfactory receptor 5AC2 (309 aa).

The Extracellular segment spans residues 1-27; it reads MDISEGNKTLVTEFVLTGLTDRPWLHV. Asn-7 carries an N-linked (GlcNAc...) asparagine glycan. The helical transmembrane segment at 28-48 threads the bilayer; the sequence is LFFVVFLVVYLITMVGNLGLI. The Cytoplasmic segment spans residues 49 to 56; that stretch reads VLIWNDPH. Residues 57-77 form a helical membrane-spanning segment; sequence LHMPMYLFLGGLAFSDACTST. Residues 78-101 are Extracellular-facing; sequence SITPRMLVNFLDKTAMISLAECIT. Cys-99 and Cys-191 form a disulfide bridge. Residues 102 to 122 form a helical membrane-spanning segment; that stretch reads QFYFFASSATTECFLLVMMAY. Over 123–135 the chain is Cytoplasmic; the sequence is DRYVAICNPLLYP. A helical transmembrane segment spans residues 136–156; sequence VMMSNKLSAQLLSISYVIGFL. Over 157-198 the chain is Extracellular; that stretch reads HPLVHVSLLLRLTFCRFNIIHYFYCEILQLFKISCNGPSINA. The helical transmembrane segment at 199 to 219 threads the bilayer; that stretch reads LMIFIFGAFIQIPTLMTIIIS. Over 220–239 the chain is Cytoplasmic; that stretch reads YTRVLFDILKKKSEKGRSKA. A helical membrane pass occupies residues 240 to 260; sequence FSTCGAHLLSVSLYYGTLIFM. Residues 261 to 273 lie on the Extracellular side of the membrane; sequence YVRPASGLAEDQD. Residues 274–294 traverse the membrane as a helical segment; sequence KVYSLFYTIIIPLLNPFIYSL. The Cytoplasmic segment spans residues 295–309; the sequence is RNKKVMHALRRVIRK.

This sequence belongs to the G-protein coupled receptor 1 family.

The protein localises to the cell membrane. Functionally, odorant receptor. The sequence is that of Olfactory receptor 5AC2 (OR5AC2) from Homo sapiens (Human).